Here is a 352-residue protein sequence, read N- to C-terminus: Ion-translocating oxidoreductase complex subunit D (352 aa).

4 helical membrane passes run 20–40 (IMLL…WFFG), 42–62 (GTLV…ALVL), 89–109 (IPPL…VIIA), and 123–143 (PAMI…TSWL). Threonine 187 is modified (FMN phosphoryl threonine). The next 5 membrane-spanning stretches (helical) occupy residues 214 to 234 (ILAG…GLWL), 242 to 262 (WHIP…GWLF), 267 to 287 (LAAP…FFIL), 301 to 321 (LIFG…GGYP), and 322 to 342 (DGVA…DYYT).

This sequence belongs to the NqrB/RnfD family. As to quaternary structure, the complex is composed of six subunits: RsxA, RsxB, RsxC, RsxD, RsxE and RsxG. It depends on FMN as a cofactor.

It is found in the cell inner membrane. Functionally, part of a membrane-bound complex that couples electron transfer with translocation of ions across the membrane. Required to maintain the reduced state of SoxR. This is Ion-translocating oxidoreductase complex subunit D from Shigella boydii serotype 18 (strain CDC 3083-94 / BS512).